The primary structure comprises 328 residues: Transcription factor bHLH25 (328 aa).

Positions 125 to 152 (PHQKSDEFNRKGTKRAQPFSRNQSNAQD) are disordered. A bHLH domain is found at 148–197 (SNAQDHIIAERKRREKLTQRFVALSALVPGLKKMDKASVLGDALKHIKYL).

As to quaternary structure, homodimer. In terms of tissue distribution, expressed in flowers.

It localises to the nucleus. The sequence is that of Transcription factor bHLH25 (BHLH25) from Arabidopsis thaliana (Mouse-ear cress).